The sequence spans 265 residues: Gamma-secretase subunit APH-1A (265 aa).

The Lumenal portion of the chain corresponds to M1–G2. A helical membrane pass occupies residues A3 to I23. Topologically, residues T24–R31 are cytoplasmic. A helical transmembrane segment spans residues V32–V52. Over W53–Q68 the chain is Lumenal. Residues Y69–A89 traverse the membrane as a helical segment. The Cytoplasmic portion of the chain corresponds to Y90–A118. The chain crosses the membrane as a helical span at residues Y119–A139. The Lumenal segment spans residues D140 to L158. A helical transmembrane segment spans residues T159–F179. Residues D180–R186 lie on the Cytoplasmic side of the membrane. A helical membrane pass occupies residues Y187–N207. The Lumenal segment spans residues P208–S213. A helical transmembrane segment spans residues L214–G234. Topologically, residues S235–D265 are cytoplasmic.

Belongs to the APH-1 family. As to quaternary structure, the functional gamma-secretase complex is composed of at least four polypeptides: a presenilin homodimer (PSEN1 or PSEN2), nicastrin (NCSTN), APH1 (APH1A or APH1B) and PSENEN/PEN2. In terms of tissue distribution, widely expressed. Expressed in leukocytes, lung, placenta, small intestine, liver, kidney, spleen thymus, skeletal muscle, heart and brain. Isoform 1 and isoform 2 are nearly expressed at the same level.

The protein resides in the endoplasmic reticulum membrane. It localises to the golgi apparatus. The protein localises to the golgi stack membrane. Its function is as follows. Non-catalytic subunit of the gamma-secretase complex, an endoprotease complex that catalyzes the intramembrane cleavage of integral membrane proteins such as Notch receptors and APP (amyloid-beta precursor protein). Required for normal gamma-secretase assembly. The gamma-secretase complex plays a role in Notch and Wnt signaling cascades and regulation of downstream processes via its role in processing key regulatory proteins, and by regulating cytosolic CTNNB1 levels. The sequence is that of Gamma-secretase subunit APH-1A (APH1A) from Homo sapiens (Human).